A 401-amino-acid chain; its full sequence is Exodeoxyribonuclease 7 large subunit (401 aa).

The protein belongs to the XseA family. In terms of assembly, heterooligomer composed of large and small subunits.

It is found in the cytoplasm. It carries out the reaction Exonucleolytic cleavage in either 5'- to 3'- or 3'- to 5'-direction to yield nucleoside 5'-phosphates.. Its function is as follows. Bidirectionally degrades single-stranded DNA into large acid-insoluble oligonucleotides, which are then degraded further into small acid-soluble oligonucleotides. The sequence is that of Exodeoxyribonuclease 7 large subunit from Clostridium botulinum (strain Loch Maree / Type A3).